Consider the following 368-residue polypeptide: Ferrochelatase (368 aa).

Fe cation-binding residues include His-209 and Glu-290.

It belongs to the ferrochelatase family.

The protein resides in the cytoplasm. The enzyme catalyses heme b + 2 H(+) = protoporphyrin IX + Fe(2+). Its pathway is porphyrin-containing compound metabolism; protoheme biosynthesis; protoheme from protoporphyrin-IX: step 1/1. Its function is as follows. Catalyzes the ferrous insertion into protoporphyrin IX. The protein is Ferrochelatase of Herminiimonas arsenicoxydans.